A 466-amino-acid polypeptide reads, in one-letter code: Glutamate decarboxylase alpha (466 aa).

Residues T62 and N83 each contribute to the substrate site. Pyridoxal 5'-phosphate-binding positions include 126–127, T212, and H275; that span reads SS. K276 bears the N6-(pyridoxal phosphate)lysine mark.

This sequence belongs to the group II decarboxylase family. As to quaternary structure, homohexamer. Pyridoxal 5'-phosphate is required as a cofactor.

The enzyme catalyses L-glutamate + H(+) = 4-aminobutanoate + CO2. Its function is as follows. Converts glutamate to gamma-aminobutyrate (GABA), consuming one intracellular proton in the reaction. The gad system helps to maintain a near-neutral intracellular pH when cells are exposed to extremely acidic conditions. The ability to survive transit through the acidic conditions of the stomach is essential for successful colonization of the mammalian host by commensal and pathogenic bacteria. The protein is Glutamate decarboxylase alpha (gadA) of Escherichia coli O6:H1 (strain CFT073 / ATCC 700928 / UPEC).